The primary structure comprises 165 residues: Calcium-binding protein H (165 aa).

EF-hand domains follow at residues 7–42, 43–78, 88–123, and 124–159; these read QIEK…MGSK, YPEK…RYQD, YFQD…IGSD, and HPKE…TIRS. Aspartate 20, aspartate 22, asparagine 24, glutamate 26, glutamate 31, aspartate 56, aspartate 58, glutamate 60, lysine 62, glutamate 67, aspartate 101, asparagine 103, aspartate 105, arginine 107, glutamate 112, aspartate 137, asparagine 139, aspartate 141, tyrosine 143, and glutamate 148 together coordinate Ca(2+).

In Dictyostelium discoideum (Social amoeba), this protein is Calcium-binding protein H (cbpH).